The primary structure comprises 197 residues: Probable chorismate pyruvate-lyase 2 (197 aa).

Over residues 1-14 the composition is skewed to basic and acidic residues; that stretch reads MRFDAADAHWRETP. Positions 1–23 are disordered; that stretch reads MRFDAADAHWRETPRPGASSAQK. Residues R73, L111, and E173 each contribute to the substrate site.

It belongs to the UbiC family.

It localises to the cytoplasm. It carries out the reaction chorismate = 4-hydroxybenzoate + pyruvate. It functions in the pathway cofactor biosynthesis; ubiquinone biosynthesis. In terms of biological role, removes the pyruvyl group from chorismate, with concomitant aromatization of the ring, to provide 4-hydroxybenzoate (4HB) for the ubiquinone pathway. The protein is Probable chorismate pyruvate-lyase 2 of Burkholderia pseudomallei (strain 1710b).